We begin with the raw amino-acid sequence, 1080 residues long: Carbamoyl phosphate synthase large chain (1080 aa).

The interval 1–403 is carboxyphosphate synthetic domain; the sequence is MPKRTDLKTI…SLQKALRGLE (403 aa). ATP is bound by residues arginine 129, arginine 169, glycine 175, glycine 176, glutamate 208, valine 210, glutamate 215, glycine 241, valine 242, histidine 243, glutamine 285, and glutamate 299. In terms of domain architecture, ATP-grasp 1 spans 133 to 328; the sequence is RVAMGEIGLD…IAKVAAKLAV (196 aa). Mg(2+) contacts are provided by glutamine 285, glutamate 299, and asparagine 301. Mn(2+) contacts are provided by glutamine 285, glutamate 299, and asparagine 301. The segment at 404–554 is oligomerization domain; sequence TGKIGLDPTG…YSTYEDECEA (151 aa). The carbamoyl phosphate synthetic domain stretch occupies residues 555–942; it reads LPSNRDKIMI…AFARAQEAGG (388 aa). Positions 679 to 876 constitute an ATP-grasp 2 domain; it reads QQLVDKLGLK…LAKIAARCMA (198 aa). ATP is bound by residues arginine 715, arginine 754, leucine 756, glutamate 761, glycine 787, valine 788, histidine 789, serine 790, glutamine 830, and glutamate 847. Residues glutamine 830, glutamate 847, and asparagine 849 each coordinate Mg(2+). The Mn(2+) site is built by glutamine 830, glutamate 847, and asparagine 849. The region spanning 943 to 1080 is the MGS-like domain; sequence IKAPPLGKAF…LQELHKELEA (138 aa). The segment at 943 to 1080 is allosteric domain; sequence IKAPPLGKAF…LQELHKELEA (138 aa).

Belongs to the CarB family. In terms of assembly, composed of two chains; the small (or glutamine) chain promotes the hydrolysis of glutamine to ammonia, which is used by the large (or ammonia) chain to synthesize carbamoyl phosphate. Tetramer of heterodimers (alpha,beta)4. The cofactor is Mg(2+). Mn(2+) serves as cofactor.

The catalysed reaction is hydrogencarbonate + L-glutamine + 2 ATP + H2O = carbamoyl phosphate + L-glutamate + 2 ADP + phosphate + 2 H(+). It catalyses the reaction hydrogencarbonate + NH4(+) + 2 ATP = carbamoyl phosphate + 2 ADP + phosphate + 2 H(+). The protein operates within amino-acid biosynthesis; L-arginine biosynthesis; carbamoyl phosphate from bicarbonate: step 1/1. It participates in pyrimidine metabolism; UMP biosynthesis via de novo pathway; (S)-dihydroorotate from bicarbonate: step 1/3. Its function is as follows. Large subunit of the glutamine-dependent carbamoyl phosphate synthetase (CPSase). CPSase catalyzes the formation of carbamoyl phosphate from the ammonia moiety of glutamine, carbonate, and phosphate donated by ATP, constituting the first step of 2 biosynthetic pathways, one leading to arginine and/or urea and the other to pyrimidine nucleotides. The large subunit (synthetase) binds the substrates ammonia (free or transferred from glutamine from the small subunit), hydrogencarbonate and ATP and carries out an ATP-coupled ligase reaction, activating hydrogencarbonate by forming carboxy phosphate which reacts with ammonia to form carbamoyl phosphate. The polypeptide is Carbamoyl phosphate synthase large chain (Xanthomonas campestris pv. campestris (strain ATCC 33913 / DSM 3586 / NCPPB 528 / LMG 568 / P 25)).